Consider the following 146-residue polypeptide: D-aminoacyl-tRNA deacylase (146 aa).

The short motif at 137-138 (GP) is the Gly-cisPro motif, important for rejection of L-amino acids element.

This sequence belongs to the DTD family. Homodimer.

It localises to the cytoplasm. It catalyses the reaction glycyl-tRNA(Ala) + H2O = tRNA(Ala) + glycine + H(+). The enzyme catalyses a D-aminoacyl-tRNA + H2O = a tRNA + a D-alpha-amino acid + H(+). In terms of biological role, an aminoacyl-tRNA editing enzyme that deacylates mischarged D-aminoacyl-tRNAs. Also deacylates mischarged glycyl-tRNA(Ala), protecting cells against glycine mischarging by AlaRS. Acts via tRNA-based rather than protein-based catalysis; rejects L-amino acids rather than detecting D-amino acids in the active site. By recycling D-aminoacyl-tRNA to D-amino acids and free tRNA molecules, this enzyme counteracts the toxicity associated with the formation of D-aminoacyl-tRNA entities in vivo and helps enforce protein L-homochirality. This Bacillus cereus (strain Q1) protein is D-aminoacyl-tRNA deacylase.